The sequence spans 58 residues: UPF0391 membrane protein Sputcn32_1322 (58 aa).

Helical transmembrane passes span 6–26 and 28–48; these read LMFL…IAGA and AGIA…SLLV.

It belongs to the UPF0391 family.

Its subcellular location is the cell membrane. This chain is UPF0391 membrane protein Sputcn32_1322, found in Shewanella putrefaciens (strain CN-32 / ATCC BAA-453).